The chain runs to 311 residues: Aspartate carbamoyltransferase catalytic subunit (311 aa).

Carbamoyl phosphate is bound by residues R55 and T56. Residue K84 participates in L-aspartate binding. 3 residues coordinate carbamoyl phosphate: R105, H133, and Q136. Residues R166 and R229 each coordinate L-aspartate. Carbamoyl phosphate-binding residues include L268 and P269.

This sequence belongs to the aspartate/ornithine carbamoyltransferase superfamily. ATCase family. As to quaternary structure, heterododecamer (2C3:3R2) of six catalytic PyrB chains organized as two trimers (C3), and six regulatory PyrI chains organized as three dimers (R2).

The catalysed reaction is carbamoyl phosphate + L-aspartate = N-carbamoyl-L-aspartate + phosphate + H(+). It functions in the pathway pyrimidine metabolism; UMP biosynthesis via de novo pathway; (S)-dihydroorotate from bicarbonate: step 2/3. Its function is as follows. Catalyzes the condensation of carbamoyl phosphate and aspartate to form carbamoyl aspartate and inorganic phosphate, the committed step in the de novo pyrimidine nucleotide biosynthesis pathway. This is Aspartate carbamoyltransferase catalytic subunit from Alkaliphilus metalliredigens (strain QYMF).